Reading from the N-terminus, the 368-residue chain is Endophilin-A2 (368 aa).

The membrane-binding amphipathic helix stretch occupies residues 1-21 (MSVAGLKKQFYKASQLVSEKV). The region spanning 18 to 249 (SEKVGGAEGT…LKRRMREASS (232 aa)) is the BAR domain. A required for dimerization upon membrane association region spans residues 60–87 (PNPASRAKLTMLNTVSKIRGQVKNPGYP). The stretch at 181–250 (EELRQAMEKF…KRRMREASSR (70 aa)) forms a coiled coil. The interaction with ARC stretch occupies residues 218–254 (LVDAQLDYHRQAVQILDELADKLKRRMREASSRPKRE). The disordered stretch occupies residues 243 to 308 (RMREASSRPK…PSRSMPPLDQ (66 aa)). The segment covering 245–263 (REASSRPKREYKPKPRELL) has biased composition (basic and acidic residues). Residues serine 288 and serine 292 each carry the phosphoserine modification. Position 298 is a phosphothreonine (threonine 298). One can recognise an SH3 domain in the interval 306–365 (LDQPSCKALYDFEPENDGELGFHEGDIITLTNQIDENWYEGMLDGQSGFFPLSYVEVLVP). Tyrosine 315 carries the post-translational modification Phosphotyrosine.

The protein belongs to the endophilin family. In terms of assembly, interacts with ARC, SYNJ1 and DNM1. Interacts with PDCD6IP. Interacts with BIN2.

Its subcellular location is the cytoplasm. It is found in the early endosome membrane. The protein resides in the cell projection. The protein localises to the podosome. Functionally, implicated in endocytosis. May recruit other proteins to membranes with high curvature. This Bos taurus (Bovine) protein is Endophilin-A2.